The chain runs to 785 residues: MINITKPLTPKSISQQKQQQQHPYKNISTTKSNNNPQASGSKSFVQEKYPSQLYESEIKIHNQSLAEYDLDIYDIMVNLIETNKPNLSLYKQQPYLTFTIRLKLIDFLLKMSIRLKILPFVFFKAVKIFDRYCSKRIVLLDQSQLIITTCLWIASKVMGGNNHFVNINNLDKIGHENFRTINDLGYGCGGKYLGPTERFRLPKLHELVKLCGAKCKYDQGMFKQMEVHVLNTLEWSLNDPSIEEFIIDSHEFNVININNNNEYEQTITTNDESANANANDGNEFFKIKEFLSYAALYSHDLIDTNIIELGQVIMDLINETFQLQPFDKHYQTILNCDSDHPIRFDMQRYKHIKKAVIKSVLNASDFMMKVFHSKGPQFIYQQFNLQYKLNYTTNSIIGGFGNSGYSPTTTTTTTTSDNISTTPTSSTGSTTPVSSYIGYANSRSSSVSSTSSVASSSNANTPSSSCSTTSTTPLGMTPHKRQKNYSNYSNYSNYSNSSTSLGLTNNNNNNTTISPVDSTTINSHTKNSSQLNYQYHNGGSNNNNHHHHHKPSLSVSIPPPQMHSHHHSSTVYQMVTPPNSANKNSNKSNSANNNNTTTIATTTTTTTNNNNNSQLPAPHQLSYNNYFNSPNMQPPPPMKYTPGRKQQQQQNQGQNQQQPLQLYQGDNNNNGTNTNSKFNSIAGSRAVSSSSSSAVSIASSISTNNYDKYDDDDDDDNSNDLFSSSRRFMNYSNYSSSTINGSVMSGVINNNSGNGKGNGNGGSGTPISENDSPIYTKTRLCNMIH.

The interval 1–42 (MINITKPLTPKSISQQKQQQQHPYKNISTTKSNNNPQASGSK) is disordered. Residues 22 to 42 (HPYKNISTTKSNNNPQASGSK) are compositionally biased toward polar residues. The Cyclin N-terminal domain maps to 71-238 (DIYDIMVNLI…VLNTLEWSLN (168 aa)). Disordered stretches follow at residues 408–433 (TTTT…TTPV), 447–679 (VSST…SKFN), and 750–774 (NNSG…DSPI). Composition is skewed to low complexity over residues 447 to 473 (VSST…STTP) and 484 to 512 (NYSN…NNTT). Polar residues predominate over residues 513 to 535 (ISPVDSTTINSHTKNSSQLNYQY). Positions 579 to 613 (NSANKNSNKSNSANNNNTTTIATTTTTTTNNNNNS) are enriched in low complexity. The segment covering 621 to 631 (LSYNNYFNSPN) has biased composition (polar residues). Over residues 646-679 (QQQQQNQGQNQQQPLQLYQGDNNNNGTNTNSKFN) the composition is skewed to low complexity. Over residues 754–764 (NGKGNGNGGSG) the composition is skewed to gly residues. The segment covering 765-774 (TPISENDSPI) has biased composition (polar residues).

This sequence belongs to the cyclin family. As to quaternary structure, interacts with CDC28.

Hypha-specific G1 cyclin-related protein involved in regulation of morphogenesis and opaque cells filamentous growth, and required for both conventional and pheromone-stimulated biofilm formation. Required to maintain hyphal tip localization of actin and SPA2. Regulates the CDC28 kinase during hyphal growth. The CDC28-HGC1 complex phosphorylates and prevents RGA2 from localizing to hyphal tips, leading to localized CDC42 activation for hyphal extension. The CDC28-HGC1 complex also phosphorylates SEC2 and maintains CDC11 phosphorylation throughout hyphal growth. Moreover CDC28-HGC1 phosphorylation of EFG1 represses cell separation genes during hyphal growth. Also partially controls SEP7 phosphorylation status and subsequent septin ring dynamics. Required for virulence and especially mediates dynamic adhesion to endothelium of blood vessels during circulation. The protein is Hypha-specific G1 cyclin-related protein 1 (HGC1) of Candida albicans (strain SC5314 / ATCC MYA-2876) (Yeast).